A 99-amino-acid chain; its full sequence is Large ribosomal subunit protein uL23 (99 aa).

Belongs to the universal ribosomal protein uL23 family. In terms of assembly, part of the 50S ribosomal subunit. Contacts protein L29, and trigger factor when it is bound to the ribosome.

One of the early assembly proteins it binds 23S rRNA. One of the proteins that surrounds the polypeptide exit tunnel on the outside of the ribosome. Forms the main docking site for trigger factor binding to the ribosome. In Synechococcus sp. (strain JA-2-3B'a(2-13)) (Cyanobacteria bacterium Yellowstone B-Prime), this protein is Large ribosomal subunit protein uL23.